The primary structure comprises 317 residues: Ferrochelatase (317 aa).

2 residues coordinate Fe cation: H192 and E271.

Belongs to the ferrochelatase family.

The protein resides in the cytoplasm. The catalysed reaction is heme b + 2 H(+) = protoporphyrin IX + Fe(2+). It functions in the pathway porphyrin-containing compound metabolism; protoheme biosynthesis; protoheme from protoporphyrin-IX: step 1/1. Catalyzes the ferrous insertion into protoporphyrin IX. The polypeptide is Ferrochelatase (Citrifermentans bemidjiense (strain ATCC BAA-1014 / DSM 16622 / JCM 12645 / Bem) (Geobacter bemidjiensis)).